The following is an 83-amino-acid chain: NAD(P)H-quinone oxidoreductase subunit L (83 aa).

The next 2 helical transmembrane spans lie at 15 to 35 (LLVL…VPLA) and 53 to 73 (LGIY…APFL).

The protein belongs to the complex I NdhL subunit family. In terms of assembly, NDH-1 can be composed of about 15 different subunits; different subcomplexes with different compositions have been identified which probably have different functions.

Its subcellular location is the cellular thylakoid membrane. It catalyses the reaction a plastoquinone + NADH + (n+1) H(+)(in) = a plastoquinol + NAD(+) + n H(+)(out). It carries out the reaction a plastoquinone + NADPH + (n+1) H(+)(in) = a plastoquinol + NADP(+) + n H(+)(out). NDH-1 shuttles electrons from an unknown electron donor, via FMN and iron-sulfur (Fe-S) centers, to quinones in the respiratory and/or the photosynthetic chain. The immediate electron acceptor for the enzyme in this species is believed to be plastoquinone. Couples the redox reaction to proton translocation, and thus conserves the redox energy in a proton gradient. Cyanobacterial NDH-1 also plays a role in inorganic carbon-concentration. The polypeptide is NAD(P)H-quinone oxidoreductase subunit L (Synechococcus sp. (strain CC9605)).